Reading from the N-terminus, the 211-residue chain is Protein U63 (211 aa).

Belongs to the herpesviridae UL92 family.

The protein is Protein U63 (U63) of Human herpesvirus 7 (strain JI) (HHV-7).